The following is a 94-amino-acid chain: Co-chaperonin GroES (94 aa).

It belongs to the GroES chaperonin family. Heptamer of 7 subunits arranged in a ring. Interacts with the chaperonin GroEL.

It is found in the cytoplasm. Together with the chaperonin GroEL, plays an essential role in assisting protein folding. The GroEL-GroES system forms a nano-cage that allows encapsulation of the non-native substrate proteins and provides a physical environment optimized to promote and accelerate protein folding. GroES binds to the apical surface of the GroEL ring, thereby capping the opening of the GroEL channel. The protein is Co-chaperonin GroES of Alkaliphilus metalliredigens (strain QYMF).